The primary structure comprises 258 residues: Short-chain dehydrogenase/reductase FrzI (258 aa).

Positions 21, 41, and 94 each coordinate NADP(+). Residues serine 143 and serine 144 each act as proton donor in the active site. NADP(+) is bound by residues tyrosine 157, lysine 161, valine 191, and threonine 193. The active-site Proton acceptor is tyrosine 157. The active-site Lowers pKa of active site Tyr is lysine 161.

It belongs to the short-chain dehydrogenases/reductases (SDR) family.

It catalyses the reaction (1S,3S,6S,7S,8R)-7-hydroxy-6-[(4-methoxyphenyl)methyl]-3-(methylamino)-5-azatricyclo[6.3.1.0(1,5)]dodecan-9-one + NADPH + H(+) = (1S,3S,6S,7S,8S,9S)-6-[(4-methoxyphenyl)methyl]-3-(methylamino)-5-azatricyclo[6.3.1.0(1,5)]dodecane-7,9-diol + NADP(+). Its pathway is secondary metabolite biosynthesis. Functionally, short-chain dehydrogenase/reductase; part of the gene cluster that mediates the biosynthesis of the alkaloid (-)-FR901483, a potent immunosuppressant that shows efficacy in animal models and a probable inhibitor of purine nucleotide biosynthesis by targeting phosphoribosylpyrophosphate amidotransferase (PPAT). Within the pathway, FrzI catalyzes the formation of dephospho-(-)-FR901483 from the aza-tricyclic intermediate produced by FrzH. The biosynthesis of (-)-FR901483 starts with the condensation of two L-tyrosines to yield (S,S)-dityrosyl-piperazine. This process occurs in 3 steps with the non-canonical nonribosomal peptide synthetase FrzA catalyzing the reduction of L-tyrosine into L-tyrosinal, the spontaneous condensation of 2 L-tyrosinal units, and the subsequent reduction by the NmrA-like family domain-containing oxidoreductase FrzB. The cytochrome P450 monooxygenase FrzC then performs coupling between N10 and C1' to morph the piperazine into a 1,4-diazabicyclo[3.2.1]octane spiro-fused to a 2,5-cyclohexadienone. The dienone portion is further reduced to cyclohexanone by the flavin-dependent reductase FrzD. The methyltranserases (MTs) FrzE and FrzF are then involved in the methylation at the C10' amine and the C4 phenolic oxygen, respectively. The order of the two MTs appear to be interchangeable. Cleavage of the C9-N10' bond by the dioxygenase FrzG then leads to formation of a conjugated iminium. In addition to the oxidation of C9, an additional dehydrogenation between C7 and C8 can occur to give a likely shunt product. The next biosynthetic step is the intramolecular aldol condensation catalyzed by the newly identified aldolase FrzH to yield an aza-tricyclic product with the formation of a C9-C3' bond. The short-chain dehydrogenase/reductase FrzI then produces dephospho-(-)-FR901483 that is phosphorylated at C4'-OH into (-)-FR901483 by the phosphotransferase FrzJ. The chain is Short-chain dehydrogenase/reductase FrzI from Cladobotryum sp.